The chain runs to 396 residues: Immunoglobulin heavy constant gamma 4 (396 aa).

A CH1 region spans residues 1–98 (ASTKGPSVFP…PSNTKVDKRV (98 aa)). Residues 1 to 347 (ASTKGPSVFP…DGELDGLWTT (347 aa)) are Extracellular-facing. 3 consecutive Ig-like domains span residues 6 to 99 (PSVF…KRVE), 118 to 217 (PSVF…KTIS), and 226 to 322 (PQVY…KSLS). Residues Cys27 and Cys83 are joined by a disulfide bond. The interval 99–110 (ESKYGPPCPSCP) is hinge. Residues 111–220 (APEFLGGPSV…SIEKTISKAK (110 aa)) form a CH2 region. Intrachain disulfides connect Cys141/Cys201 and Cys247/Cys305. The N-linked (GlcNAc...) (complex) asparagine glycan is linked to Asn177. Residues 221–327 (GQPREPQVYT…QKSLSLSLEL (107 aa)) form a CH3 region. The chain crosses the membrane as a helical span at residues 348-368 (ITIFITLFLLSVCYSATVTFF). Topologically, residues 369-396 (KVKWIFSSVVDLKQTIVPDYRNMIRQGA) are cytoplasmic.

Immunoglobulins are composed of two identical heavy chains and two identical light chains; disulfide-linked. Glycosylation on Asn-177 is required for interaction with Fc receptors and ability to activate the complement pathway. Post-translationally, (Microbial infection) Deglycosylation on Asn-177 by S.pyogenes EndoS or Endos2 endoglucosidases prevents interaction between immunoglobulin-gamma (IgG) and Fc receptors, impairing ability to activate the complement pathway.

It is found in the secreted. The protein localises to the cell membrane. In terms of biological role, constant region of immunoglobulin heavy chains. Immunoglobulins, also known as antibodies, are membrane-bound or secreted glycoproteins produced by B lymphocytes. In the recognition phase of humoral immunity, the membrane-bound immunoglobulins serve as receptors which, upon binding of a specific antigen, trigger the clonal expansion and differentiation of B lymphocytes into immunoglobulins-secreting plasma cells. Secreted immunoglobulins mediate the effector phase of humoral immunity, which results in the elimination of bound antigens. The antigen binding site is formed by the variable domain of one heavy chain, together with that of its associated light chain. Thus, each immunoglobulin has two antigen binding sites with remarkable affinity for a particular antigen. The variable domains are assembled by a process called V-(D)-J rearrangement and can then be subjected to somatic hypermutations which, after exposure to antigen and selection, allow affinity maturation for a particular antigen. The polypeptide is Immunoglobulin heavy constant gamma 4 (Homo sapiens (Human)).